Here is a 413-residue protein sequence, read N- to C-terminus: Eukaryotic initiation factor 4A-11 (413 aa).

Residues 40 to 68 (ESFDAMGLQENLLRGIYAYGFEKPSAIQQ) carry the Q motif motif. Residues 71 to 241 (IVPFCKGLDV…RKFMNKPVRI (171 aa)) form the Helicase ATP-binding domain. 84–91 (AQSGTGKT) is a binding site for ATP. The DEAD box signature appears at 189–192 (DEAD). The region spanning 252-413 (GIKQFYVNVD…ELPANVADLL (162 aa)) is the Helicase C-terminal domain.

This sequence belongs to the DEAD box helicase family. eIF4A subfamily. EIF4F is a multi-subunit complex, the composition of which varies with external and internal environmental conditions. It is composed of at least EIF4A, EIF4E and EIF4G.

The enzyme catalyses ATP + H2O = ADP + phosphate + H(+). In terms of biological role, ATP-dependent RNA helicase which is a subunit of the eIF4F complex involved in cap recognition and is required for mRNA binding to ribosome. In the current model of translation initiation, eIF4A unwinds RNA secondary structures in the 5'-UTR of mRNAs which is necessary to allow efficient binding of the small ribosomal subunit, and subsequent scanning for the initiator codon. The polypeptide is Eukaryotic initiation factor 4A-11 (Nicotiana tabacum (Common tobacco)).